Consider the following 373-residue polypeptide: S-adenosylmethionine:tRNA ribosyltransferase-isomerase (373 aa).

This sequence belongs to the QueA family. In terms of assembly, monomer.

Its subcellular location is the cytoplasm. It carries out the reaction 7-aminomethyl-7-carbaguanosine(34) in tRNA + S-adenosyl-L-methionine = epoxyqueuosine(34) in tRNA + adenine + L-methionine + 2 H(+). It functions in the pathway tRNA modification; tRNA-queuosine biosynthesis. Its function is as follows. Transfers and isomerizes the ribose moiety from AdoMet to the 7-aminomethyl group of 7-deazaguanine (preQ1-tRNA) to give epoxyqueuosine (oQ-tRNA). In Rhizobium etli (strain CIAT 652), this protein is S-adenosylmethionine:tRNA ribosyltransferase-isomerase.